Reading from the N-terminus, the 452-residue chain is Friend leukemia integration 1 transcription factor (452 aa).

Residue Ser39 is modified to Phosphoserine. Residues 112–198 enclose the PNT domain; the sequence is PPPPNMTTNE…SHLSYLRESS (87 aa). The segment at 209 to 271 is disordered; that stretch reads DQSSRLSVKE…PYQILGPTSS (63 aa). Residues 215-226 are compositionally biased toward basic and acidic residues; sequence SVKEDPSYDSVR. A compositionally biased stretch (polar residues) spans 248–257; sequence QTISKNTEQR. The segment at residues 281-361 is a DNA-binding region (ETS); it reads IQLWQFLLEL…HGKRYAYKFD (81 aa). The disordered stretch occupies residues 433–452; it reads NPNVPRHPNTHVPSHLGSYY.

It belongs to the ETS family. Can form homodimers or heterodimers with ETV6/TEL1.

It localises to the nucleus. Functionally, sequence-specific transcriptional activator. Recognizes the DNA sequence 5'-C[CA]GGAAGT-3'. The protein is Friend leukemia integration 1 transcription factor (FLI1) of Homo sapiens (Human).